A 459-amino-acid chain; its full sequence is Putrescine aminotransferase (459 aa).

Pyridoxal 5'-phosphate is bound by residues 150–151 and glutamine 274; that span reads GT. The residue at position 300 (lysine 300) is an N6-(pyridoxal phosphate)lysine. Residue threonine 332 participates in pyridoxal 5'-phosphate binding.

The protein belongs to the class-III pyridoxal-phosphate-dependent aminotransferase family. Putrescine aminotransferase subfamily. It depends on pyridoxal 5'-phosphate as a cofactor.

It carries out the reaction an alkane-alpha,omega-diamine + 2-oxoglutarate = an omega-aminoaldehyde + L-glutamate. It catalyses the reaction putrescine + 2-oxoglutarate = 1-pyrroline + L-glutamate + H2O. The catalysed reaction is cadaverine + 2-oxoglutarate = 5-aminopentanal + L-glutamate. Its pathway is amine and polyamine degradation; putrescine degradation; 4-aminobutanal from putrescine (transaminase route): step 1/1. In terms of biological role, catalyzes the aminotransferase reaction from putrescine to 2-oxoglutarate, leading to glutamate and 4-aminobutanal, which spontaneously cyclizes to form 1-pyrroline. This is the first step in one of two pathways for putrescine degradation, where putrescine is converted into 4-aminobutanoate (gamma-aminobutyrate or GABA) via 4-aminobutanal. Also functions as a cadaverine transaminase in a a L-lysine degradation pathway to succinate that proceeds via cadaverine, glutarate and L-2-hydroxyglutarate. This Salmonella heidelberg (strain SL476) protein is Putrescine aminotransferase.